Consider the following 352-residue polypeptide: Ion-translocating oxidoreductase complex subunit D (352 aa).

A run of 4 helical transmembrane segments spans residues 20–40 (IMLL…WFFG), 42–62 (GTLV…ALVL), 89–109 (IPPL…VIIA), and 123–143 (PAMI…TSWL). Position 187 is an FMN phosphoryl threonine (Thr187). 5 helical membrane-spanning segments follow: residues 214–234 (ILAG…GLWL), 242–262 (WHIP…GWLF), 267–287 (LAAP…FFIL), 301–321 (LIFG…GGYP), and 322–342 (DGVA…DYYT).

This sequence belongs to the NqrB/RnfD family. The complex is composed of six subunits: RsxA, RsxB, RsxC, RsxD, RsxE and RsxG. The cofactor is FMN.

It localises to the cell inner membrane. Functionally, part of a membrane-bound complex that couples electron transfer with translocation of ions across the membrane. Required to maintain the reduced state of SoxR. The polypeptide is Ion-translocating oxidoreductase complex subunit D (Shigella boydii serotype 18 (strain CDC 3083-94 / BS512)).